Reading from the N-terminus, the 357-residue chain is Probable leucine aminopeptidase MCYG_04170 (357 aa).

The signal sequence occupies residues 1–15 (MKVLAALALSALALA). The N-linked (GlcNAc...) asparagine glycan is linked to asparagine 76. Zn(2+) is bound by residues histidine 167 and aspartate 185. Asparagine 186 carries an N-linked (GlcNAc...) asparagine glycan. Positions 224 and 251 each coordinate Zn(2+). Residues cysteine 291 and cysteine 295 are joined by a disulfide bond. Histidine 324 contacts Zn(2+).

It belongs to the peptidase M28 family. M28E subfamily. In terms of assembly, monomer. Requires Zn(2+) as cofactor.

The protein localises to the secreted. Its function is as follows. Probable extracellular aminopeptidase which contributes to pathogenicity. In Arthroderma otae (strain ATCC MYA-4605 / CBS 113480) (Microsporum canis), this protein is Probable leucine aminopeptidase MCYG_04170.